A 505-amino-acid polypeptide reads, in one-letter code: Catalase (505 aa).

A disordered region spans residues 1–25; it reads MSRQDKKLTGVFGHPVSDRENSMTA. Catalysis depends on residues His56 and Asn129. Tyr339 provides a ligand contact to heme.

Belongs to the catalase family. In terms of assembly, homodimer. Heme serves as cofactor.

It carries out the reaction 2 H2O2 = O2 + 2 H2O. In terms of biological role, decomposes hydrogen peroxide into water and oxygen; serves to protect cells from the toxic effects of hydrogen peroxide. This chain is Catalase (katA), found in Staphylococcus aureus (strain MRSA252).